Here is a 144-residue protein sequence, read N- to C-terminus: Nucleoside diphosphate kinase (144 aa).

6 residues coordinate ATP: lysine 11, phenylalanine 59, arginine 87, threonine 93, arginine 104, and asparagine 114. The Pros-phosphohistidine intermediate role is filled by histidine 117.

Belongs to the NDK family. Homotetramer. It depends on Mg(2+) as a cofactor.

It localises to the cytoplasm. The enzyme catalyses a 2'-deoxyribonucleoside 5'-diphosphate + ATP = a 2'-deoxyribonucleoside 5'-triphosphate + ADP. The catalysed reaction is a ribonucleoside 5'-diphosphate + ATP = a ribonucleoside 5'-triphosphate + ADP. Major role in the synthesis of nucleoside triphosphates other than ATP. The ATP gamma phosphate is transferred to the NDP beta phosphate via a ping-pong mechanism, using a phosphorylated active-site intermediate. The sequence is that of Nucleoside diphosphate kinase from Coxiella burnetii (strain CbuG_Q212) (Coxiella burnetii (strain Q212)).